The sequence spans 183 residues: I-kappa-B like protein N2 (183 aa).

2 ANK repeats span residues 62–95 (DGNTCLHEAALRNKGPQAIRIMEKLIEYGADLNL) and 99–129 (CHKPVLHVAVERNDYELVAWICQQPGINLEA). The segment at 163–183 (PRQDGSSEDEVSDSEEKSDSE) is disordered.

Belongs to the polydnaviridae I-Kappa-B like protein family.

In terms of biological role, suppresses the host immune response through NF-kappa-B inactivation. Possesses ankyrin repeat domains required for NF-kappa-B binding but lacks the regulatory regions required for dissociation from NF-kappa-B and degradation. Therefore, prevents host NF-kappa-B release and subsequent activation. The sequence is that of I-kappa-B like protein N2 (N5) from Microplitis demolitor (Parasitoid wasp).